Here is a 453-residue protein sequence, read N- to C-terminus: 13-hydroxylupanine O-tigloyltransferase (453 aa).

Active-site proton acceptor residues include histidine 166 and aspartate 385.

Belongs to the plant acyltransferase family. As to quaternary structure, monomer. In terms of tissue distribution, expressed in roots and hypocotyls. Detected in seeds, leaves and cotyledons, but not in young developing leaves.

It carries out the reaction 13-hydroxylupanine + (2E)-2-methylbut-2-enoyl-CoA = 13-(2-methylcrotonoyloxy)lupanine + CoA. Its activity is regulated as follows. Inhibited by N-ethylmaleimide, p-chloromercuribenzoic acid and diethylpyrocarbonate (DEPC). Functionally, acyl-CoA-dependent acyltransferase involved in the synthesis of lupanine alkaloids. Can use both (-)-13alpha-hydroxymultiflorine and (+)-13alpha-hydroxylupanine as substrates. Lower activity with (-)-3beta, 13alpha-dihydroxylupanine, but no activity with (+)-epilupinine and (-)-lupinine as substrates. Tigloyl-CoA, benzoyl-CoA and, more slowly, acetyl-CoA, propionyl-CoA and 2-butenoyl-CoA can act as acyl donors. This Lupinus albus (White lupine) protein is 13-hydroxylupanine O-tigloyltransferase (HMT/HLT).